The following is a 315-amino-acid chain: MPDMKLFAGNSIPKLAKFIAHRLYINLGNAAVGRFSDGEISVQINENVRGSDVFIIQSTCSPTNDNIMELVVMVDALRRASAGRITAVIPYFGYSRQDRRVRSARVPITAKVVADFLSSIGVDRVLTVDLHAEQIQGFFDVPVDNVFGSLILLEDMLQRELKNPIVVSPDIGGVVRARAIAKLLYDTDMAIIDKRRPRPNISQIMHIIGDVANRDCILVDDMIDTGGTLCKAAEALKERGAKRVFAYATHPIFSGKASENLKKSVIDEVVVCDTIPLEEKIRLLPNVRTLTLAGMLAEAIRRISNEESISAMFEH.

ATP is bound by residues 37–39 (DGE) and 96–97 (RQ). Mg(2+) contacts are provided by H131 and D170. Residue K194 is part of the active site. D-ribose 5-phosphate-binding positions include R196, D220, and 224 to 228 (DTGGT).

Belongs to the ribose-phosphate pyrophosphokinase family. Class I subfamily. As to quaternary structure, homohexamer. It depends on Mg(2+) as a cofactor.

The protein resides in the cytoplasm. The enzyme catalyses D-ribose 5-phosphate + ATP = 5-phospho-alpha-D-ribose 1-diphosphate + AMP + H(+). It participates in metabolic intermediate biosynthesis; 5-phospho-alpha-D-ribose 1-diphosphate biosynthesis; 5-phospho-alpha-D-ribose 1-diphosphate from D-ribose 5-phosphate (route I): step 1/1. Its function is as follows. Involved in the biosynthesis of the central metabolite phospho-alpha-D-ribosyl-1-pyrophosphate (PRPP) via the transfer of pyrophosphoryl group from ATP to 1-hydroxyl of ribose-5-phosphate (Rib-5-P). The polypeptide is Ribose-phosphate pyrophosphokinase (Buchnera aphidicola subsp. Schizaphis graminum (strain Sg)).